The sequence spans 187 residues: Translation machinery-associated protein 22 (187 aa).

The SUI1 domain maps to Val-94–Tyr-165.

This sequence belongs to the DENR family. In terms of assembly, interacts with the 40S ribosomal subunit.

The protein localises to the cytoplasm. This is Translation machinery-associated protein 22 (tma-22) from Neurospora crassa (strain ATCC 24698 / 74-OR23-1A / CBS 708.71 / DSM 1257 / FGSC 987).